The primary structure comprises 731 residues: Zinc finger protein 615 (731 aa).

The 72-residue stretch at 8–79 (LTLEDVAVDF…EDEIYSRICS (72 aa)) folds into the KRAB domain. 19 consecutive C2H2-type zinc fingers follow at residues 204–226 (HVCS…QRVH), 232–254 (HVCS…QRTH), 260–282 (YECT…QKTH), 288–310 (YTCS…QRTH), 316–338 (HGCS…QKTH), 344–366 (YICS…HRTH), 372–394 (FICN…QQTH), 400–422 (YTCS…QRTH), 428–450 (YKCN…QRTH), 456–478 (YVCT…QRTH), 484–506 (YICN…QRTH), 512–534 (YVCG…QRTH), 540–562 (YICN…RRTH), 568–590 (YVCS…QRTH), 596–618 (YICN…QQTH), 624–646 (YKCN…QRFH), 652–674 (FACT…QRIH), 680–702 (YKCS…QRKH), and 708–730 (YGCS…RRIH).

It belongs to the krueppel C2H2-type zinc-finger protein family.

The protein localises to the nucleus. In terms of biological role, may be involved in transcriptional regulation. The protein is Zinc finger protein 615 (ZNF615) of Homo sapiens (Human).